A 264-amino-acid chain; its full sequence is MQKPRIVLKIGSSNLCNGKIIDKTQIKALAQIISELKMRFDVILVSSGAVASGHTTLHIDRNTLQNKQALASIGQPLLMESYREALKDYAIPTAQLLLVWRDFDSRKNTTFAKDTIDTLLAHNALPIINENDTIATDEMVFGDNDRLGAYVTYYFGAKLLIILSDIDGYFDKNPHQYDDAQILPIVHSIPSQALEQTHSPHGDFATGGIVTKLIAADFLLQRKCMMFLSHGRKLDVLRDFLLHNKQSSGTLFCPADSQGIKTLI.

Lysine 9 is a binding site for ATP. The substrate site is built by serine 47, aspartate 132, and asparagine 144. ATP contacts are provided by residues 164–165 (SD) and 206–212 (TGGIVTK).

The protein belongs to the glutamate 5-kinase family.

Its subcellular location is the cytoplasm. It catalyses the reaction L-glutamate + ATP = L-glutamyl 5-phosphate + ADP. Its pathway is amino-acid biosynthesis; L-proline biosynthesis; L-glutamate 5-semialdehyde from L-glutamate: step 1/2. Catalyzes the transfer of a phosphate group to glutamate to form L-glutamate 5-phosphate. The protein is Glutamate 5-kinase of Helicobacter hepaticus (strain ATCC 51449 / 3B1).